The chain runs to 899 residues: MERPSFLDQEPPAGYVPGIGRGATGFSTKEKQVVSNDDKGRRIPKRYRENLNNHLQSQPKDDEDDEAANVFKTLELKLAQKKKKRANEKDDDNSVDSSNVKRQFADLKESLAAVTESEWMDIPDATDFTRRNKRNRIQEQLNRKTYAAPDSLIPGNVDLNKLTEEREKLLQSQIDENLAQLTKNASNPIQVNKPNAATDALSYLKDLENDRVNSLSDATLEDLQKMRTILKSYRKADPTNPQGWIASARLEEKARKFSVAKKIIENGCQECPRSSDIWLENIRLHESDVHYCKTLVATAINFNPTSPLLWFKAIDLESTTVNKYRVVRKALQEIPRDEGLWKLAVSFEADKAQVIKMLEKATQFIPQSMDLLTAYTNLQSYHNAKMTLNSFRKILPQEPEIWIISTLLEERNNPDIPVDKLVSLLKEGLLELSKNGYKATLSAWLKRAEALNDAPNSNLTCQAIVYAILEWLRESGEYESELNNVDQILEKMPHSKVQIAVLKKLIQWDPCDTVLWSRLKMATESYHKIEELLAFFQELLFQTKNSDDIRANMREKSPGLLMMYVSEYWKAQKGDTRQTLVLIDQIIDFAPHNLDLRFFKIKLLGRSLQLDELRDFFQQTFSSLEDFKISGTERLYYKYVNFLRYQDLNEEAIKFLNERCLKSFPICHKFFLQLGQIYHSMGNIEMSRETYLSGTRLVPNCPLLWVSLSKIDEIDLKNPVRARSILDRGLLKNPDDVLFYIAKIQMEIRLGNLDQAELLVTQALQKFPSNALLWVEQIKLFKHGNKSSLKKTIFQDALRRTQNDHRVLLEIGVSFYAEAQYETSLKWLERALKKCSRYGDTWVWLFRTYARLGKDTVDLYNMFDQCEPTYGPEWIAASKNVKMQYCTPREILLRLMNDK.

The segment at 1-65 (MERPSFLDQE…QSQPKDDEDD (65 aa)) is disordered. The span at 28-51 (TKEKQVVSNDDKGRRIPKRYRENL) shows a compositional bias: basic and acidic residues. 13 HAT repeats span residues 221 to 253 (EDLQ…LEEK), 255 to 287 (RKFS…LHES), 289 to 318 (VHYC…DLES), 319 to 350 (TTVN…FEAD), 352 to 381 (AQVI…LQSY), 383 to 414 (NAKM…RNNP), 493 to 525 (PHSK…ATES), 545 to 578 (NSDD…DTRQ), 608 to 645 (LQLD…FLRY), 648 to 680 (LNEE…IYHS), 682 to 714 (GNIE…IDEI), 751 to 783 (GNLD…LFKH), and 819 to 851 (AQYE…TYAR).

Component of the U4/U6-U5 tri-snRNP complex composed of the U4, U6 and U5 snRNAs and at least PRP3, PRP4, PRP6, PRP8, PRP18, PRP31, PRP38, SNU13, SNU23, SNU66, SNU114, SPP381, SMB1, SMD1, SMD2, SMD3, SMX2, SMX3, LSM2, LSM3, LSM4, LSM5, LSM6, LSM7, LSM8, BRR2 and DIB1.

The protein resides in the nucleus. Its function is as follows. Participates in pre-mRNA splicing. Part of the U4/U5/U6 tri-snRNP complex, one of the building blocks of the spliceosome. The polypeptide is Pre-mRNA-splicing factor 6 (PRP6) (Saccharomyces cerevisiae (strain ATCC 204508 / S288c) (Baker's yeast)).